A 1187-amino-acid chain; its full sequence is DNA-directed RNA polymerase subunit beta (1187 aa).

The tract at residues K1150 to Q1187 is disordered. Residues A1173–Q1187 are compositionally biased toward basic and acidic residues.

It belongs to the RNA polymerase beta chain family. As to quaternary structure, the RNAP catalytic core consists of 2 alpha, 1 beta, 1 beta' and 1 omega subunit. When a sigma factor is associated with the core the holoenzyme is formed, which can initiate transcription.

It catalyses the reaction RNA(n) + a ribonucleoside 5'-triphosphate = RNA(n+1) + diphosphate. Its function is as follows. DNA-dependent RNA polymerase catalyzes the transcription of DNA into RNA using the four ribonucleoside triphosphates as substrates. The polypeptide is DNA-directed RNA polymerase subunit beta (Bifidobacterium longum (strain DJO10A)).